A 95-amino-acid polypeptide reads, in one-letter code: uncharacterized protein (95 aa).

Basic and acidic residues-rich tracts occupy residues 1 to 28 and 41 to 53; these read MRRA…KERC and DERV…KGRP. Residues 1–73 are disordered; sequence MRRAEVKRSA…RTSRAGSSWQ (73 aa).

This is an uncharacterized protein from Homo sapiens (Human).